We begin with the raw amino-acid sequence, 585 residues long: Arginine--tRNA ligase (585 aa).

The short motif at 131–141 (ANPTGPMHVGH) is the 'HIGH' region element.

It belongs to the class-I aminoacyl-tRNA synthetase family. In terms of assembly, monomer.

It is found in the cytoplasm. The catalysed reaction is tRNA(Arg) + L-arginine + ATP = L-arginyl-tRNA(Arg) + AMP + diphosphate. The sequence is that of Arginine--tRNA ligase from Brucella suis (strain ATCC 23445 / NCTC 10510).